The chain runs to 241 residues: Ribonuclease P protein component 3 (241 aa).

This sequence belongs to the eukaryotic/archaeal RNase P protein component 3 family. Consists of a catalytic RNA component and at least 4-5 protein subunits.

It is found in the cytoplasm. It catalyses the reaction Endonucleolytic cleavage of RNA, removing 5'-extranucleotides from tRNA precursor.. In terms of biological role, part of ribonuclease P, a protein complex that generates mature tRNA molecules by cleaving their 5'-ends. The polypeptide is Ribonuclease P protein component 3 (Methanococcoides burtonii (strain DSM 6242 / NBRC 107633 / OCM 468 / ACE-M)).